Here is a 441-residue protein sequence, read N- to C-terminus: Glutamate--tRNA ligase 1 (441 aa).

The short motif at 7–17 (PSPTGYMHIGN) is the 'HIGH' region element. Residues 236–240 (KMSKR) carry the 'KMSKS' region motif. Lysine 239 is a binding site for ATP.

Belongs to the class-I aminoacyl-tRNA synthetase family. Glutamate--tRNA ligase type 1 subfamily. Monomer.

It localises to the cytoplasm. It catalyses the reaction tRNA(Glu) + L-glutamate + ATP = L-glutamyl-tRNA(Glu) + AMP + diphosphate. Functionally, catalyzes the attachment of glutamate to tRNA(Glu) in a two-step reaction: glutamate is first activated by ATP to form Glu-AMP and then transferred to the acceptor end of tRNA(Glu). The polypeptide is Glutamate--tRNA ligase 1 (Anaplasma marginale (strain St. Maries)).